A 346-amino-acid chain; its full sequence is 4-hydroxy-2-oxohexanoate aldolase (346 aa).

The 253-residue stretch at 7-259 (VRITDTSLRD…KTGIDFFDIA (253 aa)) folds into the Pyruvate carboxyltransferase domain. Position 15–16 (15–16 (RD)) interacts with substrate. Asp16 contributes to the Mn(2+) binding site. His19 acts as the Proton acceptor in catalysis. Substrate contacts are provided by Ser169 and His198. Mn(2+)-binding residues include His198 and His200. Tyr289 provides a ligand contact to substrate.

Belongs to the 4-hydroxy-2-oxovalerate aldolase family. As to quaternary structure, homodimer. Forms a heterotetramer composed of two aldolase (HsaF) and two dehydrogenase (HsaG) subunits. Requires Mn(2+) as cofactor.

The catalysed reaction is (S)-4-hydroxy-2-oxohexanoate = propanal + pyruvate. It carries out the reaction (S)-4-hydroxy-2-oxopentanoate = acetaldehyde + pyruvate. Its function is as follows. Involved in cholesterol degradation. Catalyzes the retro-aldol cleavage of 4-hydroxy-2-oxohexanoate (HOHA) to pyruvate and propanal. Can also catalyze the cleavage of 4-hydroxy-2-oxopentanoate (HOPA) to pyruvate and acetaldehyde. The aldehydes produced by this reaction are directly channeled to the dehydrogenase HsaG. This is 4-hydroxy-2-oxohexanoate aldolase from Mycobacterium bovis (strain ATCC BAA-935 / AF2122/97).